A 465-amino-acid chain; its full sequence is tRNA-2-methylthio-N(6)-dimethylallyladenosine synthase (465 aa).

Residues 26–141 (MRAHIITYGC…LPEALKANER (116 aa)) enclose the MTTase N-terminal domain. 6 residues coordinate [4Fe-4S] cluster: cysteine 35, cysteine 71, cysteine 104, cysteine 173, cysteine 177, and cysteine 180. Positions 159-388 (PKGALSAHVT…IEKQKEWSYR (230 aa)) constitute a Radical SAM core domain. A TRAM domain is found at 391 to 453 (LEWVGKTVEV…PHLLFGEVVG (63 aa)).

The protein belongs to the methylthiotransferase family. MiaB subfamily. In terms of assembly, monomer. [4Fe-4S] cluster is required as a cofactor.

It is found in the cytoplasm. The enzyme catalyses N(6)-dimethylallyladenosine(37) in tRNA + (sulfur carrier)-SH + AH2 + 2 S-adenosyl-L-methionine = 2-methylsulfanyl-N(6)-dimethylallyladenosine(37) in tRNA + (sulfur carrier)-H + 5'-deoxyadenosine + L-methionine + A + S-adenosyl-L-homocysteine + 2 H(+). In terms of biological role, catalyzes the methylthiolation of N6-(dimethylallyl)adenosine (i(6)A), leading to the formation of 2-methylthio-N6-(dimethylallyl)adenosine (ms(2)i(6)A) at position 37 in tRNAs that read codons beginning with uridine. In Thermus thermophilus (strain ATCC BAA-163 / DSM 7039 / HB27), this protein is tRNA-2-methylthio-N(6)-dimethylallyladenosine synthase.